The chain runs to 432 residues: Probable pectate lyase 22 (432 aa).

Positions 1-45 (MFRPNSLLIPSNLSTTKSQRNTMLNSSYLSFALIFFCCILFSALA) are cleaved as a signal peptide. N65 is a glycosylation site (N-linked (GlcNAc...) asparagine). Residues D228, D252, and D256 each coordinate Ca(2+). Residue R308 is part of the active site.

This sequence belongs to the polysaccharide lyase 1 family. The cofactor is Ca(2+).

The enzyme catalyses Eliminative cleavage of (1-&gt;4)-alpha-D-galacturonan to give oligosaccharides with 4-deoxy-alpha-D-galact-4-enuronosyl groups at their non-reducing ends.. It participates in glycan metabolism; pectin degradation; 2-dehydro-3-deoxy-D-gluconate from pectin: step 2/5. The polypeptide is Probable pectate lyase 22 (Arabidopsis thaliana (Mouse-ear cress)).